Consider the following 1323-residue polypeptide: Glutamate receptor ionotropic, NMDA 2D (1323 aa).

The N-terminal stretch at Met1–Pro27 is a signal peptide. Residues Phe28–Ser579 lie on the Extracellular side of the membrane. A glycan (N-linked (GlcNAc...) asparagine) is linked at Asn89. An intrachain disulfide couples Cys101 to Cys345. N-linked (GlcNAc...) asparagine glycosylation is found at Asn349, Asn363, Asn381, and Asn464. Disulfide bonds link Cys452/Cys480 and Cys459/Cys481. L-glutamate-binding residues include Ser536, Thr538, and Arg543. The N-linked (GlcNAc...) asparagine glycan is linked to Asn566. The chain crosses the membrane as a helical span at residues Pro580–Phe601. Over Glu602–Ile626 the chain is Cytoplasmic. The discontinuously helical intramembrane region spans Gly627–Phe638. Residues Lys628–Pro647 form a pore-forming region. Topologically, residues Asn639 to Thr650 are cytoplasmic. Residues Thr651–Thr671 traverse the membrane as a helical segment. Residues Ala672 to Asp840 lie on the Extracellular side of the membrane. N-linked (GlcNAc...) asparagine glycosylation is present at Asn712. L-glutamate is bound by residues Ser714, Thr715, and Asp756. An intrachain disulfide couples Cys770 to Cys825. A helical transmembrane segment spans residues Asn841–His864. Residues Leu865 to Val1323 lie on the Cytoplasmic side of the membrane. Disordered regions lie at residues Glu897–Ala952, Ala977–Gly1112, and Pro1201–Val1323. Positions Ala899–Phe929 are enriched in pro residues. The span at Pro931–Trp940 shows a compositional bias: basic and acidic residues. Over residues Ala977 to Pro986 the composition is skewed to low complexity. The span at Leu987–Ser1001 shows a compositional bias: pro residues. Residues Ala1030–Pro1039 are compositionally biased toward low complexity. Pro residues predominate over residues Thr1080–Cys1092. Basic residues predominate over residues Pro1208–His1228. Arg1303 carries the omega-N-methylarginine modification. Ser1313 is modified (phosphoserine). A PDZ-binding motif is present at residues Ser1321–Val1323.

It belongs to the glutamate-gated ion channel (TC 1.A.10.1) family. NR2D/GRIN2D subfamily. As to quaternary structure, heterotetramer. Forms heterotetrameric channels composed of two GluN1/zeta subunits (GRIN1), and two identical GluN2/epsilon subunits (GRIN2A, GRIN2B, GRIN2C or GRIN2D) or GluN3 subunits (GRIN3A or GRIN3B) (in vitro). In vivo, the subunit composition may depend on the expression levels of the different subunits. Interacts with PDZ domains of PATJ and DLG4. As to expression, expressed in brain, mainly in the subcortical region.

Its subcellular location is the cell membrane. The protein resides in the postsynaptic cell membrane. It carries out the reaction Ca(2+)(in) = Ca(2+)(out). The catalysed reaction is Na(+)(in) = Na(+)(out). The enzyme catalyses K(+)(in) = K(+)(out). Its function is as follows. Component of N-methyl-D-aspartate (NMDA) receptors (NMDARs) that function as heterotetrameric, ligand-gated cation channels with high calcium permeability and voltage-dependent block by Mg(2+). Participates in synaptic plasticity for learning and memory formation. Channel activation requires binding of the neurotransmitter L-glutamate to the GluN2 subunit, glycine or D-serine binding to the GluN1 subunit, plus membrane depolarization to eliminate channel inhibition by Mg(2+). NMDARs mediate simultaneously the potasium efflux and the influx of calcium and sodium. Each GluN2 subunit confers differential attributes to channel properties, including activation, deactivation and desensitization kinetics, pH sensitivity, Ca2(+) permeability, and binding to allosteric modulators. The chain is Glutamate receptor ionotropic, NMDA 2D from Rattus norvegicus (Rat).